The primary structure comprises 293 residues: Dioxygenase cdmA (293 aa).

Residues histidine 135, aspartate 137, and histidine 212 each contribute to the Fe cation site.

Belongs to the PhyH family. Homodimer. The cofactor is Fe cation.

The catalysed reaction is chrodrimanin C + 2-oxoglutarate + O2 = verruculide A + succinate + CO2 + H2O. It carries out the reaction chrodrimanin H + 2-oxoglutarate + O2 = chrodrimanin E + succinate + CO2 + H2O. The protein operates within secondary metabolite biosynthesis; terpenoid biosynthesis. Its function is as follows. Dioxygenase; part of the gene cluster that mediates the biosynthesis of chrodrimanin B, a meroterpenoid that acts as a potent blocker of insect GABA-gated chloride channels. The first step of the pathway is the biosynthesis of 6-hydroxymellein by the polyketide synthase cdmE. The prenyltransferase cdmH acts as a 6-hydroxymellein 5-farnesyltransferase and produces the hydrophobic metabolite verruculide C. The FAD-dependent monooxygenase cdmI further converts verruculide C into verruculide B. The terpene cyclase cdmG then produced the pentacyclic molecule 3-hydroxypentacecilide A, the backbone structure of chrodrimanin B, via folding the farnesyl moiety of the substrate into the chair-boat conformation. The short-chain dehydrogenase/reductase cdmF functions as the 3-OH dehydrogenase that oxidizes the C-3 hydroxyl group of 3-hydroxypentacecilide A and produces chrodrimanin C, the dehydrogenated product of 3-hydroxypentacecilide A. The cytochrome P450 monooxygenase cdmJ then accepts both 3-hydroxypentacecilide A and chrodrimanin C and functions as a C-7-beta-hydroxylase to produce respectively chrodrimanin H and chrodrimanin F. The dioxygenase cdmA accepts chrodrimanin H to afford chrodrimanin E, which is further transformed to chrodrimanin A by the dioxygenase cdmD. CdmA can also accept chrodrimanin C as substrate to convert it into verruculide A, which is further converted into chrodrimanin T by cdmD. The last step of the biosynthesis is proposed to be performed by the acetyltransferase cdmC which acetylates chrodrimanin A to yield chrodrimanin B. The pathway may also lead to the production of additional shunt products, including chrodrimanins T and U. In Talaromyces verruculosus (Penicillium verruculosum), this protein is Dioxygenase cdmA.